The chain runs to 474 residues: Glutamate--tRNA ligase (474 aa).

The 'HIGH' region signature appears at 9–19 (PSPTGYLHVGG). The short motif at 240–244 (KLSKR) is the 'KMSKS' region element. Lys243 contacts ATP.

Belongs to the class-I aminoacyl-tRNA synthetase family. Glutamate--tRNA ligase type 1 subfamily. In terms of assembly, monomer.

The protein resides in the cytoplasm. The enzyme catalyses tRNA(Glu) + L-glutamate + ATP = L-glutamyl-tRNA(Glu) + AMP + diphosphate. Catalyzes the attachment of glutamate to tRNA(Glu) in a two-step reaction: glutamate is first activated by ATP to form Glu-AMP and then transferred to the acceptor end of tRNA(Glu). The protein is Glutamate--tRNA ligase of Vibrio cholerae serotype O1 (strain ATCC 39315 / El Tor Inaba N16961).